A 562-amino-acid polypeptide reads, in one-letter code: Tissue-type plasminogen activator (562 aa).

The signal sequence occupies residues 1–22 (MDAMKRGLCCVLLLCGAVFVSP). Positions 23-32 (SQEIHARFRR) are excised as a propeptide. A propeptide spans 33-35 (GAR) (removed by plasmin). Residues 39–81 (VICRDEKTQMIYQQHQSWLRPVLRSNRVEYCWCNSGRAQCHSV) form the Fibronectin type-I domain. 17 disulfides stabilise this stretch: Cys41–Cys71, Cys69–Cys78, Cys86–Cys97, Cys91–Cys108, Cys110–Cys119, Cys127–Cys208, Cys148–Cys190, Cys179–Cys203, Cys215–Cys296, Cys236–Cys278, Cys267–Cys291, Cys299–Cys430, Cys342–Cys358, Cys350–Cys419, Cys444–Cys519, Cys476–Cys492, and Cys509–Cys537. The important for binding to annexin A2 stretch occupies residues 42-52 (RDEKTQMIYQQ). One can recognise an EGF-like domain in the interval 82–120 (PVKSCSEPRCFNGGTCQQALYFSDFVCQCPEGFAGKCCE). A glycan (O-linked (Fuc) threonine) is linked at Thr96. 2 consecutive Kringle domains span residues 127 to 208 (CYED…TPAC) and 215 to 296 (CYFG…VPSC). Asn152 is a glycosylation site (N-linked (GlcNAc...) asparagine). Asn219 is a glycosylation site (N-linked (GlcNAc...) asparagine; partial). Residues 311-561 (IKGGLFADIA…YLDWIRDNMR (251 aa)) enclose the Peptidase S1 domain. Catalysis depends on charge relay system residues His357 and Asp406. Residue Asn483 is glycosylated (N-linked (GlcNAc...) asparagine). The active-site Charge relay system is Ser513.

Belongs to the peptidase S1 family. Heterodimer of chain A and chain B held by a disulfide bond. Forms a heterodimer with SERPINA5. Binds to fibrin with high affinity. This interaction leads to an increase in the catalytic efficiency of the enzyme between 100-fold and 1000-fold, due to an increase in affinity for plasminogen. Similarly, binding to heparin increases the activation of plasminogen. Binds to annexin A2, cytokeratin-8, fibronectin and laminin. Binds to mannose receptor and the low-density lipoprotein receptor-related protein (LRP1); these proteins are involved in TPA clearance. Yet unidentified interactions on endothelial cells and vascular smooth muscle cells (VSMC) lead to a 100-fold stimulation of plasminogen activation. In addition, binding to VSMC reduces TPA inhibition by PAI-1 by 30-fold. Binds LRP1B; binding is followed by internalization and degradation. Interacts with SERPINE1. In complex with SERPINE1, interacts with SORL1. Interacts with apyrase from Anopheles gambiae saliva; the interaction results in PLAT activation probably via an allosteric activation mechanism. Post-translationally, the single chain, almost fully active enzyme, can be further processed into a two-chain fully active form by a cleavage after Arg-310 catalyzed by plasmin, tissue kallikrein or factor Xa. Differential cell-specific N-linked glycosylation gives rise to two glycoforms, type I (glycosylated at Asn-219) and type II (not glycosylated at Asn-219). The single chain type I glycoform is less readily converted into the two-chain form by plasmin, and the two-chain type I glycoform has a lower activity than the two-chain type II glycoform in the presence of fibrin. In terms of processing, N-glycosylation of Asn-152; the bound oligomannosidic glycan is involved in the interaction with the mannose receptor. Post-translationally, characterization of O-linked glycan was studied in Bowes melanoma cell line. As to expression, synthesized in numerous tissues (including tumors) and secreted into most extracellular body fluids, such as plasma, uterine fluid, saliva, gingival crevicular fluid, tears, seminal fluid, and milk.

Its subcellular location is the secreted. The protein resides in the extracellular space. It carries out the reaction Specific cleavage of Arg-|-Val bond in plasminogen to form plasmin.. Its activity is regulated as follows. Inhibited by SERPINA5. Inhibited by SERPINE1. Functionally, converts the abundant, but inactive, zymogen plasminogen to plasmin by hydrolyzing a single Arg-Val bond in plasminogen. By controlling plasmin-mediated proteolysis, it plays an important role in tissue remodeling and degradation, in cell migration and many other physiopathological events. During oocyte activation, plays a role in cortical granule reaction in the zona reaction, which contributes to the block to polyspermy. The chain is Tissue-type plasminogen activator from Homo sapiens (Human).